The chain runs to 490 residues: Patellin-3 (490 aa).

Low complexity predominate over residues 1 to 17 (MAEEPTTTTLVTPEKLP). The disordered stretch occupies residues 1–121 (MAEEPTTTTL…ESSKLSDLSN (121 aa)). N-acetylalanine is present on A2. The segment covering 19–33 (PSLTPSEVSESTQDA) has biased composition (polar residues). The segment covering 46 to 56 (ETNPPETADTT) has biased composition (low complexity). 2 stretches are compositionally biased toward basic and acidic residues: residues 57 to 69 (TKPE…EHHP) and 79 to 100 (STEK…EKKS). S108 carries the post-translational modification Phosphoserine. Basic and acidic residues predominate over residues 109–121 (FKEESSKLSDLSN). Residue K193 forms a Glycyl lysine isopeptide (Lys-Gly) (interchain with G-Cter in ubiquitin) linkage. A CRAL-TRIO domain is found at 202–377 (EEDLVDDLDK…QYGGLSVDPC (176 aa)). Residues 353 to 487 (AETLFKYISP…KKKLVYRFNV (135 aa)) form the GOLD domain.

Belongs to the patellin family.

It localises to the membrane. It is found in the cytoplasm. Carrier protein that may be involved in membrane-trafficking events associated with cell plate formation during cytokinesis. Binds to some hydrophobic molecules such as phosphoinositides and promotes their transfer between the different cellular sites. The protein is Patellin-3 (PATL3) of Arabidopsis thaliana (Mouse-ear cress).